The primary structure comprises 139 residues: Large ribosomal subunit protein uL13 (139 aa).

This sequence belongs to the universal ribosomal protein uL13 family. Part of the 50S ribosomal subunit.

In terms of biological role, this protein is one of the early assembly proteins of the 50S ribosomal subunit, although it is not seen to bind rRNA by itself. It is important during the early stages of 50S assembly. The protein is Large ribosomal subunit protein uL13 of Wolinella succinogenes (strain ATCC 29543 / DSM 1740 / CCUG 13145 / JCM 31913 / LMG 7466 / NCTC 11488 / FDC 602W) (Vibrio succinogenes).